A 1048-amino-acid polypeptide reads, in one-letter code: Dyslexia-associated protein KIAA0319-like protein (1048 aa).

The Cytoplasmic portion of the chain corresponds to 1-29 (MEKRLGVKPSPASWVLPGYCWQTSVKLPR). Residues 30 to 50 (SLYLLYSFFCFSVLWLSTDAD) form a helical membrane-spanning segment. The MANSC domain maps to 49 to 127 (ADESRCQQGK…PFRTDSSNSM (79 aa)). The Extracellular portion of the chain corresponds to 51-928 (ESRCQQGKTL…RDGDSNCEWS (878 aa)). Disordered regions lie at residues 198–218 (HGAM…LSPT) and 231–300 (SFTS…STSA). Residues 231–241 (SFTSNHTTQTP) are compositionally biased toward polar residues. An N-linked (GlcNAc...) asparagine glycan is attached at Asn246. 2 stretches are compositionally biased toward low complexity: residues 247–261 (VSIH…SPVS) and 287–300 (ATPT…STSA). PKD domains are found at residues 309–400 (VVSA…VKPE), 408–497 (VAVV…VNKA), 503–593 (VANA…VQPE), 599–687 (QADA…VKEE), and 693–784 (VAKI…VKPD). The N-linked (GlcNAc...) asparagine glycan is linked to Asn394. Positions 593-623 (ENNKPPQADAGPDKELTLPVDSTTLDGSKST) are disordered. A helical membrane pass occupies residues 929–949 (VLYVIIASFVIVVALGILSWT). Residues 950–1048 (TICCCKRQKG…KSRSAREEIL (99 aa)) lie on the Cytoplasmic side of the membrane. Thr973 is subject to Phosphothreonine. Ser977 carries the post-translational modification Phosphoserine. Residues 980–1007 (LKPTSRAGSKQKGPTLSSSLMHSESELD) are disordered. Over residues 985 to 994 (RAGSKQKGPT) the composition is skewed to polar residues. Phosphoserine occurs at positions 1008 and 1030. Residues 1024–1048 (LYGQNGSVPNGQTPLKSRSAREEIL) form a disordered region. Polar residues predominate over residues 1027-1039 (QNGSVPNGQTPLK). Thr1036 bears the Phosphothreonine mark.

In terms of assembly, interacts with RTN4R. Post-translationally, N-glycosylated.

It localises to the cytoplasmic granule membrane. The protein resides in the golgi apparatus membrane. The protein localises to the golgi apparatus. Its subcellular location is the trans-Golgi network membrane. It is found in the cell membrane. In terms of biological role, possible role in axon guidance through interaction with RTN4R. Functionally, (Microbial infection) Acts as a receptor for adeno-associated virus and is involved in adeno-associated virus infection through endocytosis system. The sequence is that of Dyslexia-associated protein KIAA0319-like protein from Mus musculus (Mouse).